The following is a 120-amino-acid chain: Dense granule protein 5 (120 aa).

The first 25 residues, methionine 1 to alanine 25, serve as a signal peptide directing secretion. The segment at serine 27 to serine 59 is disordered. The helical transmembrane segment at alanine 76 to leucine 93 threads the bilayer. Residues alanine 100 to alanine 109 are compositionally biased toward basic and acidic residues. The interval alanine 100–glutamate 120 is disordered. Acidic residues predominate over residues threonine 110 to glutamate 120.

The protein localises to the secreted. It localises to the parasitophorous vacuole lumen. The protein resides in the parasitophorous vacuole membrane. Its subcellular location is the cytoplasmic vesicle. It is found in the secretory vesicle. Its function is as follows. Plays a role in the function of the cyst and parasitophorous vacuole membranes and therefore in host-parasite interactions. The protein is Dense granule protein 5 (GRA5) of Toxoplasma gondii.